The primary structure comprises 1001 residues: Serine/threonine-protein kinase TAO1-B (1001 aa).

One can recognise a Protein kinase domain in the interval 28-281 (FSDLREIGHG…SDELLKHMFV (254 aa)). Residues 34–42 (IGHGSFGAV) and Lys57 contribute to the ATP site. The active-site Proton acceptor is the Asp151. Disordered stretches follow at residues 324 to 435 (PAVE…YRNR) and 567 to 586 (KEEL…EWLS). Residues 350–370 (SNQSIPSMSISASSQSSSVNS) are compositionally biased toward low complexity. Basic and acidic residues-rich tracts occupy residues 375-388 (SDDK…EGDH) and 577-586 (PKKEKQEWLS). 2 coiled-coil regions span residues 458 to 651 (SELR…EHAM) and 754 to 877 (KAVL…EIEA). Residues 911 to 1001 (SHNPTGGPGP…ISNGSHMSYT (91 aa)) are disordered. A compositionally biased stretch (low complexity) spans 921–930 (HWGHPMAGPP). Composition is skewed to polar residues over residues 949 to 967 (GSVQ…NSPQ) and 975 to 1001 (GGRT…MSYT).

Belongs to the protein kinase superfamily. STE Ser/Thr protein kinase family. STE20 subfamily.

It is found in the cytoplasm. The enzyme catalyses L-seryl-[protein] + ATP = O-phospho-L-seryl-[protein] + ADP + H(+). The catalysed reaction is L-threonyl-[protein] + ATP = O-phospho-L-threonyl-[protein] + ADP + H(+). Functionally, serine/threonine-protein kinase involved in various processes such as p38/mapk14 stress-activated MAPK cascade, DNA damage response and regulation of cytoskeleton stability. Acts as an activator of the p38/MAPK14 stress-activated MAPK cascade by mediating phosphorylation and subsequent activation of upstream MAP kinase kinases. In response to DNA damage, involved in the G2/M transition DNA damage checkpoint by activating the p38/MAPK14 stress-activated MAPK cascade. This is Serine/threonine-protein kinase TAO1-B (taok1-b) from Xenopus laevis (African clawed frog).